The following is a 964-amino-acid chain: Phosphoenolpyruvate carboxylase (964 aa).

Serine 11 carries the post-translational modification Phosphoserine. Residues histidine 172 and lysine 600 contribute to the active site.

It belongs to the PEPCase type 1 family. In terms of assembly, homotetramer. It depends on Mg(2+) as a cofactor.

It localises to the cytoplasm. The enzyme catalyses oxaloacetate + phosphate = phosphoenolpyruvate + hydrogencarbonate. It functions in the pathway photosynthesis; C4 acid pathway. By light-reversible phosphorylation. Through the carboxylation of phosphoenolpyruvate (PEP) it forms oxaloacetate, a four-carbon dicarboxylic acid source for the tricarboxylic acid cycle. This is Phosphoenolpyruvate carboxylase from Amaranthus hypochondriacus (Prince-of-Wales feather).